The following is a 209-amino-acid chain: Probable GTP-binding protein EngB (209 aa).

The EngB-type G domain occupies 12-203; the sequence is VSFEIIFVGR…RDRLHEMKRD (192 aa). GTP is bound by residues 20 to 27, 45 to 49, 62 to 65, 142 to 145, and 179 to 181; these read GRSNVGKS, GVTLR, DMPG, NKMD, and ISA. Residues serine 27 and threonine 47 each contribute to the Mg(2+) site.

The protein belongs to the TRAFAC class TrmE-Era-EngA-EngB-Septin-like GTPase superfamily. EngB GTPase family. The cofactor is Mg(2+).

Its function is as follows. Necessary for normal cell division and for the maintenance of normal septation. In Methanosarcina barkeri (strain Fusaro / DSM 804), this protein is Probable GTP-binding protein EngB.